The primary structure comprises 173 residues: Ribosome maturation factor RimM (173 aa).

The PRC barrel domain occupies Glu95 to Phe173.

This sequence belongs to the RimM family. In terms of assembly, binds ribosomal protein uS19.

Its subcellular location is the cytoplasm. In terms of biological role, an accessory protein needed during the final step in the assembly of 30S ribosomal subunit, possibly for assembly of the head region. Essential for efficient processing of 16S rRNA. May be needed both before and after RbfA during the maturation of 16S rRNA. It has affinity for free ribosomal 30S subunits but not for 70S ribosomes. The protein is Ribosome maturation factor RimM of Hahella chejuensis (strain KCTC 2396).